The primary structure comprises 562 residues: Formate--tetrahydrofolate ligase (562 aa).

Residue 71-78 coordinates ATP; that stretch reads TPAGEGKS.

It belongs to the formate--tetrahydrofolate ligase family.

The enzyme catalyses (6S)-5,6,7,8-tetrahydrofolate + formate + ATP = (6R)-10-formyltetrahydrofolate + ADP + phosphate. It functions in the pathway one-carbon metabolism; tetrahydrofolate interconversion. The chain is Formate--tetrahydrofolate ligase from Bacillus cereus (strain ATCC 14579 / DSM 31 / CCUG 7414 / JCM 2152 / NBRC 15305 / NCIMB 9373 / NCTC 2599 / NRRL B-3711).